Here is a 37-residue protein sequence, read N- to C-terminus: MKVRPSVKPICPKCKIIRRKKRVMVICENPKHKQRQG.

The protein belongs to the bacterial ribosomal protein bL36 family.

The polypeptide is Large ribosomal subunit protein bL36 (Hydrogenobaculum sp. (strain Y04AAS1)).